Reading from the N-terminus, the 142-residue chain is Protein archease (142 aa).

Aspartate 12, aspartate 141, and isoleucine 142 together coordinate Ca(2+).

Belongs to the archease family.

In terms of biological role, activates the tRNA-splicing ligase complex by facilitating the enzymatic turnover of catalytic subunit RtcB. Acts by promoting the guanylylation of RtcB, a key intermediate step in tRNA ligation. Can also alter the NTP specificity of RtcB such that ATP, dGTP or ITP is used efficiently. The sequence is that of Protein archease from Pyrococcus furiosus (strain ATCC 43587 / DSM 3638 / JCM 8422 / Vc1).